The following is a 204-amino-acid chain: MSIFEYNGSAVVAMVGKNCFAIASDRRLGVQLQTIATDFQRISKIHDHLFIGLSGLATDVQTLYQRLVFRHKLYQLREERDMKPETFASLVSAILYEKRFGPFLCQPVIAGLGDDNKPFICTMDSIGAKELAKDFVVSGTASESLYGACEAMFKPDMEAEELFETISQALLSSVDRDCLSGWGGHVYVVTPKEVKERILKGRMD.

Belongs to the peptidase T1B family. Component of the 20S core complex of the 26S proteasome. The 26S proteasome is composed of a core protease (CP), known as the 20S proteasome, capped at one or both ends by the 19S regulatory particle (RP/PA700). The 20S proteasome core is composed of 28 subunits that are arranged in four stacked rings, resulting in a barrel-shaped structure. The two end rings are each formed by seven alpha subunits, and the two central rings are each formed by seven beta subunits. The catalytic chamber with the active sites is on the inside of the barrel.

The protein localises to the cytoplasm. It is found in the nucleus. Functionally, non-catalytic component of the proteasome, a multicatalytic proteinase complex which is characterized by its ability to cleave peptides with Arg, Phe, Tyr, Leu, and Glu adjacent to the leaving group at neutral or slightly basic pH. The proteasome has an ATP-dependent proteolytic activity. The chain is Proteasome subunit beta type-3-B (PBC2) from Arabidopsis thaliana (Mouse-ear cress).